The sequence spans 422 residues: ATP phosphoribosyltransferase regulatory subunit (422 aa).

It belongs to the class-II aminoacyl-tRNA synthetase family. HisZ subfamily. As to quaternary structure, heteromultimer composed of HisG and HisZ subunits.

Its subcellular location is the cytoplasm. It functions in the pathway amino-acid biosynthesis; L-histidine biosynthesis; L-histidine from 5-phospho-alpha-D-ribose 1-diphosphate: step 1/9. In terms of biological role, required for the first step of histidine biosynthesis. May allow the feedback regulation of ATP phosphoribosyltransferase activity by histidine. This is ATP phosphoribosyltransferase regulatory subunit from Clostridium botulinum (strain 657 / Type Ba4).